The sequence spans 164 residues: Gastrin-releasing peptide (164 aa).

The signal sequence occupies residues 1-27 (MGGGGPRRPGTLPLLALLALLAAHGGA). Residue methionine 54 is modified to Methionine amide. A propeptide spanning residues 58–164 (STGDFPYAYE…YQLCPTSALS (107 aa)) is cleaved from the precursor.

The protein belongs to the bombesin/neuromedin-B/ranatensin family.

It is found in the secreted. It localises to the cytoplasmic vesicle. The protein localises to the secretory vesicle lumen. Stimulates the release of gastrin and other gastrointestinal hormones. Stimulates pancreatic protein and fluid secretion, and increases acid secretion from the avian proventriculus. The protein is Gastrin-releasing peptide (GRP) of Gallus gallus (Chicken).